The sequence spans 201 residues: Probable molybdenum cofactor guanylyltransferase (201 aa).

GTP contacts are provided by residues 6-8, Lys18, Asp65, and Asp97; that span reads LAG. Position 97 (Asp97) interacts with Mg(2+).

This sequence belongs to the MobA family. Requires Mg(2+) as cofactor.

Its subcellular location is the cytoplasm. The enzyme catalyses Mo-molybdopterin + GTP + H(+) = Mo-molybdopterin guanine dinucleotide + diphosphate. In terms of biological role, transfers a GMP moiety from GTP to Mo-molybdopterin (Mo-MPT) cofactor (Moco or molybdenum cofactor) to form Mo-molybdopterin guanine dinucleotide (Mo-MGD) cofactor. In Staphylococcus haemolyticus (strain JCSC1435), this protein is Probable molybdenum cofactor guanylyltransferase.